Reading from the N-terminus, the 410-residue chain is Arginine deiminase (410 aa).

Cysteine 400 functions as the Amidino-cysteine intermediate in the catalytic mechanism.

Belongs to the arginine deiminase family.

The protein resides in the cytoplasm. The catalysed reaction is L-arginine + H2O = L-citrulline + NH4(+). Its pathway is amino-acid degradation; L-arginine degradation via ADI pathway; carbamoyl phosphate from L-arginine: step 1/2. The chain is Arginine deiminase from Lactococcus lactis subsp. cremoris (strain MG1363).